Here is a 250-residue protein sequence, read N- to C-terminus: MSGHSKWSTIKRKKGANDAKRGKIFTRLIKEITVAARGGGGDPEGNPRLRSAILVAKSENMPKDNITRAIKKGTGEIAGEVYDEILYEGYGPGGVAVLVECMTDNRNRTVADIRHYFAKNNGNLGEAGCVSWMFEKKGLILVDKATITEDELMDQALEAGAEDVVEDETEFQVLTNPTELDAVRGAMEAAGIAFVDASISMLPKNVVDVTDEKVGKNLLRLLESLEDHDDVQNVHSNFDIDEELMEQLAE.

Belongs to the TACO1 family.

It localises to the cytoplasm. In Desulfotalea psychrophila (strain LSv54 / DSM 12343), this protein is Probable transcriptional regulatory protein DP2908.